The sequence spans 269 residues: 4-hydroxy-tetrahydrodipicolinate reductase (269 aa).

NAD(+)-binding positions include 10–15, E36, 99–101, and 123–126; these read GANGRM, GTT, and AANF. The active-site Proton donor/acceptor is H156. H157 serves as a coordination point for (S)-2,3,4,5-tetrahydrodipicolinate. The active-site Proton donor is K160. 166-167 serves as a coordination point for (S)-2,3,4,5-tetrahydrodipicolinate; it reads GT.

This sequence belongs to the DapB family.

The protein localises to the cytoplasm. It carries out the reaction (S)-2,3,4,5-tetrahydrodipicolinate + NAD(+) + H2O = (2S,4S)-4-hydroxy-2,3,4,5-tetrahydrodipicolinate + NADH + H(+). The enzyme catalyses (S)-2,3,4,5-tetrahydrodipicolinate + NADP(+) + H2O = (2S,4S)-4-hydroxy-2,3,4,5-tetrahydrodipicolinate + NADPH + H(+). It participates in amino-acid biosynthesis; L-lysine biosynthesis via DAP pathway; (S)-tetrahydrodipicolinate from L-aspartate: step 4/4. In terms of biological role, catalyzes the conversion of 4-hydroxy-tetrahydrodipicolinate (HTPA) to tetrahydrodipicolinate. In Neisseria meningitidis serogroup A / serotype 4A (strain DSM 15465 / Z2491), this protein is 4-hydroxy-tetrahydrodipicolinate reductase.